A 435-amino-acid chain; its full sequence is Serine--tRNA ligase (435 aa).

237-239 (TAE) is a binding site for L-serine. Position 268–270 (268–270 (RSE)) interacts with ATP. Glu-291 is a binding site for L-serine. 355-358 (EISS) contacts ATP. Ser-390 is an L-serine binding site.

Belongs to the class-II aminoacyl-tRNA synthetase family. Type-1 seryl-tRNA synthetase subfamily. As to quaternary structure, homodimer. The tRNA molecule binds across the dimer.

It localises to the cytoplasm. The enzyme catalyses tRNA(Ser) + L-serine + ATP = L-seryl-tRNA(Ser) + AMP + diphosphate + H(+). It carries out the reaction tRNA(Sec) + L-serine + ATP = L-seryl-tRNA(Sec) + AMP + diphosphate + H(+). It functions in the pathway aminoacyl-tRNA biosynthesis; selenocysteinyl-tRNA(Sec) biosynthesis; L-seryl-tRNA(Sec) from L-serine and tRNA(Sec): step 1/1. Its function is as follows. Catalyzes the attachment of serine to tRNA(Ser). Is also able to aminoacylate tRNA(Sec) with serine, to form the misacylated tRNA L-seryl-tRNA(Sec), which will be further converted into selenocysteinyl-tRNA(Sec). This chain is Serine--tRNA ligase, found in Lactobacillus acidophilus (strain ATCC 700396 / NCK56 / N2 / NCFM).